Here is a 439-residue protein sequence, read N- to C-terminus: ATP-dependent RNA helicase SUB2 (439 aa).

The span at 1–19 shows a compositional bias: acidic residues; sequence MSHEGEEDLLEYSDNEQEI. The tract at residues 1 to 48 is disordered; the sequence is MSHEGEEDLLEYSDNEQEIQVDNKETAVEGTTENEATQENGEADKKGS. Residues 29 to 40 are compositionally biased toward polar residues; that stretch reads EGTTENEATQEN. The Q motif signature appears at 55-83; it reads TGFKDFLLKPELSRAIIDCGFEHPSEVQQ. A Helicase ATP-binding domain is found at 86-261; it reads IPQSIHGTDV…RRFLQNPLEI (176 aa). Residue 99–106 coordinates ATP; the sequence is AKSGLGKT. A DECD box motif is present at residues 208–211; the sequence is DECD. A Helicase C-terminal domain is found at 273-434; it reads GLQQYYIKLE…EFPEEGIDPS (162 aa).

Belongs to the DEAD box helicase family. DECD subfamily.

The protein resides in the nucleus. It carries out the reaction ATP + H2O = ADP + phosphate + H(+). Functionally, ATP-binding RNA helicase involved in transcription elongation and required for the export of mRNA out of the nucleus. SUB2 also plays a role in pre-mRNA splicing and spliceosome assembly. May be involved in rDNA and telomeric silencing, and maintenance of genome integrity. The sequence is that of ATP-dependent RNA helicase SUB2 (SUB2) from Candida glabrata (strain ATCC 2001 / BCRC 20586 / JCM 3761 / NBRC 0622 / NRRL Y-65 / CBS 138) (Yeast).